The following is a 155-amino-acid chain: Transcriptional repressor NrdR (155 aa).

A compositionally biased stretch (polar residues) spans 1 to 11 (MECPNCHQNAS). The tract at residues 1–22 (MECPNCHQNASRVIDSRPSDEN) is disordered. Residues 3–34 (CPNCHQNASRVIDSRPSDENRAIRRRRECENC) fold into a zinc finger. The ATP-cone domain occupies 49–139 (LLVIKNDGTR…IYREFKDMSS (91 aa)).

The protein belongs to the NrdR family. Requires Zn(2+) as cofactor.

Functionally, negatively regulates transcription of bacterial ribonucleotide reductase nrd genes and operons by binding to NrdR-boxes. This chain is Transcriptional repressor NrdR, found in Lactobacillus helveticus (strain DPC 4571).